The sequence spans 399 residues: Probable F-box protein At4g22060 (399 aa).

The 37-residue stretch at 12-48 (SWSKLPLDLLIMVFERLGFVDFQRTKSVCLAWLYASR) folds into the F-box domain.

The sequence is that of Probable F-box protein At4g22060 from Arabidopsis thaliana (Mouse-ear cress).